A 446-amino-acid polypeptide reads, in one-letter code: tRNA modification GTPase MnmE (446 aa).

The (6S)-5-formyl-5,6,7,8-tetrahydrofolate site is built by arginine 24, glutamate 81, and lysine 120. Residues 216–368 (GLHAVLIGPP…LHIRLRALAL (153 aa)) enclose the TrmE-type G domain. Residue asparagine 226 participates in K(+) binding. GTP contacts are provided by residues 226-231 (NAGKSS), 245-251 (TDVAGTT), and 270-273 (DTAG). Serine 230 provides a ligand contact to Mg(2+). K(+) is bound by residues threonine 245, valine 247, and threonine 250. Position 251 (threonine 251) interacts with Mg(2+). Lysine 446 serves as a coordination point for (6S)-5-formyl-5,6,7,8-tetrahydrofolate.

It belongs to the TRAFAC class TrmE-Era-EngA-EngB-Septin-like GTPase superfamily. TrmE GTPase family. Homodimer. Heterotetramer of two MnmE and two MnmG subunits. The cofactor is K(+).

It is found in the cytoplasm. In terms of biological role, exhibits a very high intrinsic GTPase hydrolysis rate. Involved in the addition of a carboxymethylaminomethyl (cmnm) group at the wobble position (U34) of certain tRNAs, forming tRNA-cmnm(5)s(2)U34. The chain is tRNA modification GTPase MnmE from Xanthomonas euvesicatoria pv. vesicatoria (strain 85-10) (Xanthomonas campestris pv. vesicatoria).